A 363-amino-acid chain; its full sequence is NAD(P)H-quinone oxidoreductase subunit 1, chloroplastic (363 aa).

The next 6 membrane-spanning stretches (helical) occupy residues 30–50 (LIPIFTLVLGITIGVLVIVWL), 104–124 (IAVISILLSYLVIPFSYHLVL), 127–147 (LSIGVFLWIAISSIAPVGLLM), 248–268 (YSGIKFGLFYVASYLNLLVSS), 300–320 (VFGTIIGIFITLAKTYLFLFI), and 343–363 (FLLPISLGNLLLTTCSQLISL).

This sequence belongs to the complex I subunit 1 family. As to quaternary structure, NDH is composed of at least 16 different subunits, 5 of which are encoded in the nucleus.

It localises to the plastid. The protein resides in the chloroplast thylakoid membrane. It catalyses the reaction a plastoquinone + NADH + (n+1) H(+)(in) = a plastoquinol + NAD(+) + n H(+)(out). It carries out the reaction a plastoquinone + NADPH + (n+1) H(+)(in) = a plastoquinol + NADP(+) + n H(+)(out). NDH shuttles electrons from NAD(P)H:plastoquinone, via FMN and iron-sulfur (Fe-S) centers, to quinones in the photosynthetic chain and possibly in a chloroplast respiratory chain. The immediate electron acceptor for the enzyme in this species is believed to be plastoquinone. Couples the redox reaction to proton translocation, and thus conserves the redox energy in a proton gradient. This is NAD(P)H-quinone oxidoreductase subunit 1, chloroplastic from Lactuca sativa (Garden lettuce).